The following is a 145-amino-acid chain: Putative pre-16S rRNA nuclease (145 aa).

It belongs to the YqgF nuclease family.

Its subcellular location is the cytoplasm. Functionally, could be a nuclease involved in processing of the 5'-end of pre-16S rRNA. The polypeptide is Putative pre-16S rRNA nuclease (Sulfurihydrogenibium sp. (strain YO3AOP1)).